Here is a 312-residue protein sequence, read N- to C-terminus: Ornithine carbamoyltransferase (312 aa).

Residues 50–53, glutamine 77, arginine 101, and 128–131 contribute to the carbamoyl phosphate site; these read STRT and HPCQ. L-ornithine is bound by residues asparagine 160, aspartate 224, and 228-229; that span reads SM. Carbamoyl phosphate-binding positions include 264 to 265 and arginine 292; that span reads CL.

This sequence belongs to the aspartate/ornithine carbamoyltransferase superfamily. OTCase family.

The protein localises to the cytoplasm. It catalyses the reaction carbamoyl phosphate + L-ornithine = L-citrulline + phosphate + H(+). The protein operates within amino-acid biosynthesis; L-arginine biosynthesis; L-arginine from L-ornithine and carbamoyl phosphate: step 1/3. Its function is as follows. Reversibly catalyzes the transfer of the carbamoyl group from carbamoyl phosphate (CP) to the N(epsilon) atom of ornithine (ORN) to produce L-citrulline. This is Ornithine carbamoyltransferase from Leifsonia xyli subsp. xyli (strain CTCB07).